We begin with the raw amino-acid sequence, 110 residues long: Small ribosomal subunit protein eS25 (110 aa).

The disordered stretch occupies residues 1–39 (MPPKAAGGKSKQIQASKAAAKGSSGGAGRKKWSKGRSRE).

This sequence belongs to the eukaryotic ribosomal protein eS25 family.

This chain is Small ribosomal subunit protein eS25 (rps25), found in Dictyostelium discoideum (Social amoeba).